Here is a 957-residue protein sequence, read N- to C-terminus: Glycine dehydrogenase (decarboxylating) (957 aa).

Position 708 is an N6-(pyridoxal phosphate)lysine (K708).

This sequence belongs to the GcvP family. In terms of assembly, the glycine cleavage system is composed of four proteins: P, T, L and H. Requires pyridoxal 5'-phosphate as cofactor.

It carries out the reaction N(6)-[(R)-lipoyl]-L-lysyl-[glycine-cleavage complex H protein] + glycine + H(+) = N(6)-[(R)-S(8)-aminomethyldihydrolipoyl]-L-lysyl-[glycine-cleavage complex H protein] + CO2. Functionally, the glycine cleavage system catalyzes the degradation of glycine. The P protein binds the alpha-amino group of glycine through its pyridoxal phosphate cofactor; CO(2) is released and the remaining methylamine moiety is then transferred to the lipoamide cofactor of the H protein. In Pectobacterium atrosepticum (strain SCRI 1043 / ATCC BAA-672) (Erwinia carotovora subsp. atroseptica), this protein is Glycine dehydrogenase (decarboxylating).